A 37-amino-acid chain; its full sequence is Large ribosomal subunit protein bL36c (37 aa).

Belongs to the bacterial ribosomal protein bL36 family.

Its subcellular location is the plastid. It is found in the chloroplast. This is Large ribosomal subunit protein bL36c from Piper cenocladum (Ant piper).